The following is a 393-amino-acid chain: S-adenosylmethionine synthase (393 aa).

Histidine 16 contributes to the ATP binding site. Aspartate 18 contributes to the Mg(2+) binding site. Position 44 (glutamate 44) interacts with K(+). Positions 57 and 100 each coordinate L-methionine. The tract at residues 100–110 (QSQDIAQGVDK) is flexible loop. ATP-binding positions include 167–169 (DAK), 238–239 (RF), aspartate 247, 253–254 (RK), alanine 270, and lysine 274. Aspartate 247 contacts L-methionine. Residue lysine 278 coordinates L-methionine.

This sequence belongs to the AdoMet synthase family. As to quaternary structure, homotetramer; dimer of dimers. It depends on Mg(2+) as a cofactor. Requires K(+) as cofactor.

It localises to the cytoplasm. The enzyme catalyses L-methionine + ATP + H2O = S-adenosyl-L-methionine + phosphate + diphosphate. Its pathway is amino-acid biosynthesis; S-adenosyl-L-methionine biosynthesis; S-adenosyl-L-methionine from L-methionine: step 1/1. Its function is as follows. Catalyzes the formation of S-adenosylmethionine (AdoMet) from methionine and ATP. The overall synthetic reaction is composed of two sequential steps, AdoMet formation and the subsequent tripolyphosphate hydrolysis which occurs prior to release of AdoMet from the enzyme. The sequence is that of S-adenosylmethionine synthase from Delftia acidovorans (strain DSM 14801 / SPH-1).